A 346-amino-acid chain; its full sequence is Transposase for insertion sequence element IS1533 (346 aa).

This sequence belongs to the transposase IS1111A/IS1328/IS1533 family.

Functionally, required for the transposition of the insertion element. The protein is Transposase for insertion sequence element IS1533 (tnhA) of Leptospira borgpetersenii.